Here is a 106-residue protein sequence, read N- to C-terminus: Large ribosomal subunit protein uL24 (106 aa).

This sequence belongs to the universal ribosomal protein uL24 family. In terms of assembly, part of the 50S ribosomal subunit.

Functionally, one of two assembly initiator proteins, it binds directly to the 5'-end of the 23S rRNA, where it nucleates assembly of the 50S subunit. One of the proteins that surrounds the polypeptide exit tunnel on the outside of the subunit. The sequence is that of Large ribosomal subunit protein uL24 from Acidovorax sp. (strain JS42).